The chain runs to 443 residues: D-inositol 3-phosphate glycosyltransferase (443 aa).

Histidine 30 serves as a coordination point for 1D-myo-inositol 3-phosphate. UDP-N-acetyl-alpha-D-glucosamine is bound by residues 36-37 and glycine 44; that span reads QP. 1D-myo-inositol 3-phosphate is bound by residues 41–46, lysine 99, tyrosine 132, threonine 156, and arginine 176; that span reads DAGGMN. UDP-N-acetyl-alpha-D-glucosamine-binding residues include arginine 250, lysine 255, and arginine 316. 3 residues coordinate Mg(2+): phenylalanine 325, arginine 326, and cysteine 328. Positions 338 and 346 each coordinate UDP-N-acetyl-alpha-D-glucosamine. Threonine 352 provides a ligand contact to Mg(2+).

Belongs to the glycosyltransferase group 1 family. MshA subfamily. As to quaternary structure, homodimer.

The enzyme catalyses 1D-myo-inositol 3-phosphate + UDP-N-acetyl-alpha-D-glucosamine = 1D-myo-inositol 2-acetamido-2-deoxy-alpha-D-glucopyranoside 3-phosphate + UDP + H(+). Its function is as follows. Catalyzes the transfer of a N-acetyl-glucosamine moiety to 1D-myo-inositol 3-phosphate to produce 1D-myo-inositol 2-acetamido-2-deoxy-glucopyranoside 3-phosphate in the mycothiol biosynthesis pathway. The sequence is that of D-inositol 3-phosphate glycosyltransferase from Stackebrandtia nassauensis (strain DSM 44728 / CIP 108903 / NRRL B-16338 / NBRC 102104 / LLR-40K-21).